Here is a 238-residue protein sequence, read N- to C-terminus: Phosphoglycolate phosphatase (238 aa).

Residue Asp-8 is the Nucleophile of the active site. Residues Asp-8 and Asp-10 each contribute to the Mg(2+) site. A substrate-binding site is contributed by Lys-163. Mg(2+) is bound by residues Asp-186 and Asp-190.

Belongs to the archaeal SPP-like hydrolase family. The cofactor is Mg(2+).

The catalysed reaction is 2-phosphoglycolate + H2O = glycolate + phosphate. Functionally, catalyzes the dephosphorylation of 2-phosphoglycolate. The protein is Phosphoglycolate phosphatase of Staphylothermus marinus (strain ATCC 43588 / DSM 3639 / JCM 9404 / F1).